We begin with the raw amino-acid sequence, 279 residues long: Thymidylate synthase (279 aa).

133–134 (RR) contributes to the dUMP binding site. Cys154 serves as the catalytic Nucleophile. Residues 178–181 (RSND), Asn189, and 219–221 (HIY) contribute to the dUMP site. Asp181 is a (6R)-5,10-methylene-5,6,7,8-tetrahydrofolate binding site. Ala278 lines the (6R)-5,10-methylene-5,6,7,8-tetrahydrofolate pocket.

The protein belongs to the thymidylate synthase family. Bacterial-type ThyA subfamily. In terms of assembly, homodimer.

It is found in the cytoplasm. The enzyme catalyses dUMP + (6R)-5,10-methylene-5,6,7,8-tetrahydrofolate = 7,8-dihydrofolate + dTMP. Its pathway is pyrimidine metabolism; dTTP biosynthesis. Its function is as follows. Catalyzes the reductive methylation of 2'-deoxyuridine-5'-monophosphate (dUMP) to 2'-deoxythymidine-5'-monophosphate (dTMP) while utilizing 5,10-methylenetetrahydrofolate (mTHF) as the methyl donor and reductant in the reaction, yielding dihydrofolate (DHF) as a by-product. This enzymatic reaction provides an intracellular de novo source of dTMP, an essential precursor for DNA biosynthesis. The chain is Thymidylate synthase from Streptococcus pyogenes serotype M3 (strain SSI-1).